We begin with the raw amino-acid sequence, 186 residues long: Peptidyl-tRNA hydrolase (186 aa).

Tyr-14 is a tRNA binding site. His-19 acts as the Proton acceptor in catalysis. Phe-64, Asn-66, and Asn-112 together coordinate tRNA.

It belongs to the PTH family. In terms of assembly, monomer.

The protein localises to the cytoplasm. It catalyses the reaction an N-acyl-L-alpha-aminoacyl-tRNA + H2O = an N-acyl-L-amino acid + a tRNA + H(+). In terms of biological role, hydrolyzes ribosome-free peptidyl-tRNAs (with 1 or more amino acids incorporated), which drop off the ribosome during protein synthesis, or as a result of ribosome stalling. Its function is as follows. Catalyzes the release of premature peptidyl moieties from peptidyl-tRNA molecules trapped in stalled 50S ribosomal subunits, and thus maintains levels of free tRNAs and 50S ribosomes. In Anaplasma marginale (strain St. Maries), this protein is Peptidyl-tRNA hydrolase.